Reading from the N-terminus, the 468-residue chain is Ribulose bisphosphate carboxylase large chain (468 aa).

Lysine 5 carries the post-translational modification N6,N6,N6-trimethyllysine. Residues asparagine 114 and threonine 164 each contribute to the substrate site. Lysine 166 serves as the catalytic Proton acceptor. Lysine 168 provides a ligand contact to substrate. 3 residues coordinate Mg(2+): lysine 192, aspartate 194, and glutamate 195. Lysine 192 carries the N6-carboxylysine modification. Histidine 285 serves as the catalytic Proton acceptor. Substrate contacts are provided by arginine 286, histidine 318, and serine 370.

This sequence belongs to the RuBisCO large chain family. Type I subfamily. Heterohexadecamer of 8 large chains and 8 small chains; disulfide-linked. The disulfide link is formed within the large subunit homodimers. Requires Mg(2+) as cofactor. In terms of processing, the disulfide bond which can form in the large chain dimeric partners within the hexadecamer appears to be associated with oxidative stress and protein turnover.

Its subcellular location is the plastid. It is found in the chloroplast. The catalysed reaction is 2 (2R)-3-phosphoglycerate + 2 H(+) = D-ribulose 1,5-bisphosphate + CO2 + H2O. It catalyses the reaction D-ribulose 1,5-bisphosphate + O2 = 2-phosphoglycolate + (2R)-3-phosphoglycerate + 2 H(+). Its function is as follows. RuBisCO catalyzes two reactions: the carboxylation of D-ribulose 1,5-bisphosphate, the primary event in carbon dioxide fixation, as well as the oxidative fragmentation of the pentose substrate in the photorespiration process. Both reactions occur simultaneously and in competition at the same active site. The protein is Ribulose bisphosphate carboxylase large chain of Anthospermum herbaceum.